A 117-amino-acid chain; its full sequence is Large ribosomal subunit protein bL20c (117 aa).

It belongs to the bacterial ribosomal protein bL20 family.

It is found in the plastid. The protein localises to the chloroplast. Its function is as follows. Binds directly to 23S ribosomal RNA and is necessary for the in vitro assembly process of the 50S ribosomal subunit. It is not involved in the protein synthesizing functions of that subunit. The polypeptide is Large ribosomal subunit protein bL20c (Morus indica (Mulberry)).